A 200-amino-acid chain; its full sequence is MAKKTYDLLFKLLLIGDSGVGKTCVLFRFSDDAFNTTFISTIGIDFKIKTVELQGKKIKLQIWDTAGQERFHTITTSYYRGAMGIMLVYDITNGKSFENISKWLRNIDEHANEDVERMLLGNKCDMDDKRVVPKGKGEQIAREHGIRFFETSAKANINIEKAFLTLAEDILRKTPVKEPNSENVDISSGGGVTGWKSKCC.

GTP contacts are provided by Ser-18, Gly-19, Val-20, Gly-21, Lys-22, Thr-23, Cys-24, Asn-35, Thr-36, Ser-40, and Thr-41. Thr-23 contacts Mg(2+). 2 short sequence motifs (switch) span residues 32 to 46 and 64 to 81; these read DAFN…GIDF and DTAG…YYRG. Mg(2+) is bound by residues Thr-41 and Asp-64. GTP is bound at residue Gly-67. Thr-73 carries the post-translational modification Phosphothreonine; by LRRK2. Lys-102 is subject to N6-acetyllysine. Lys-102 participates in a covalent cross-link: Glycyl lysine isopeptide (Lys-Gly) (interchain with G-Cter in ubiquitin). GTP contacts are provided by Asn-122, Lys-123, Asp-125, and Met-126. Lys-136 participates in a covalent cross-link: Glycyl lysine isopeptide (Lys-Gly) (interchain with G-Cter in ubiquitin). GTP contacts are provided by Ser-152, Ala-153, and Lys-154. Residue Lys-154 forms a Glycyl lysine isopeptide (Lys-Gly) (interchain with G-Cter in ubiquitin) linkage. 2 S-geranylgeranyl cysteine lipidation sites follow: Cys-199 and Cys-200.

The protein belongs to the small GTPase superfamily. Rab family. In terms of assembly, interacts with MYO5A; mediates the transport to the plasma membrane of SLC2A4/GLUT4 storage vesicles. Interacts with GDI1 and with GDI2; negatively regulates RAB10 association with membranes and activation. Interacts (GDP-bound form) with LLGL1; the interaction is direct and promotes RAB10 association with membranes and activation through competition with the Rab inhibitor GDI1. Interacts with EXOC4; probably associates with the exocyst. Interacts (GTP-bound form) with MICALCL, MICAL1, MICAL3, EHBP1 and EHBP1L1; at least in case of MICAL1 two molecules of RAB10 can bind to one molecule of MICAL1. Interacts with TBC1D13. Interacts with SEC16A. Interacts with CHM and CHML. Interacts with LRRK2; interaction facilitates phosphorylation of Thr-73. Interacts (when phosphorylated on Thr-73) with RILPL1 and RILPL2. Interacts with TBC1D21. Interacts with MARCKS. Requires Mg(2+) as cofactor. Ubiquitinated upon Legionella pneumophila infection. Ubiquitination does not lead to proteasomal degradation. In terms of processing, phosphorylation of Thr-73 in the switch II region by LRRK2 prevents the association of dRAB regulatory proteins, including CHM, CHML and RAB GDP dissociation inhibitors GDI1 and GDI2. Phosphorylation of Thr-73 by LRRK2 is stimulated by RAB29 and RAB32. Phosphorylation by LRRK2 is required for localization to stressed lysosomes. As to expression, expressed in the hippocampus. Expressed in neutrophils (at protein level). Expressed in the testis (at protein level).

It is found in the cytoplasmic vesicle membrane. The protein resides in the golgi apparatus membrane. It localises to the golgi apparatus. The protein localises to the trans-Golgi network membrane. Its subcellular location is the endosome membrane. It is found in the recycling endosome membrane. The protein resides in the cytoplasmic vesicle. It localises to the phagosome membrane. The protein localises to the cytoplasm. Its subcellular location is the cytoskeleton. It is found in the cilium basal body. The protein resides in the endoplasmic reticulum membrane. It localises to the perinuclear region. The protein localises to the lysosome. It carries out the reaction GTP + H2O = GDP + phosphate + H(+). With respect to regulation, regulated by guanine nucleotide exchange factors (GEFs) DENND4C and RABIF which promote the exchange of bound GDP for free GTP. Regulated by GTPase activating proteins (GAPs) including TBC1D21 which increase the GTP hydrolysis activity. Inhibited by GDP dissociation inhibitors GDI1 and GDI2 which prevent Rab-GDP dissociation. In terms of biological role, the small GTPases Rab are key regulators of intracellular membrane trafficking, from the formation of transport vesicles to their fusion with membranes. Rabs cycle between an inactive GDP-bound form and an active GTP-bound form that is able to recruit to membranes different set of downstream effectors directly responsible for vesicle formation, movement, tethering and fusion. That Rab is mainly involved in the biosynthetic transport of proteins from the Golgi to the plasma membrane. Regulates, for instance, SLC2A4/GLUT4 glucose transporter-enriched vesicles delivery to the plasma membrane. In parallel, it regulates the transport of TLR4, a toll-like receptor to the plasma membrane and therefore may be important for innate immune response. Also plays a specific role in asymmetric protein transport to the plasma membrane. In neurons, it is involved in axonogenesis through regulation of vesicular membrane trafficking toward the axonal plasma membrane. In epithelial cells, it regulates transport from the Golgi to the basolateral membrane. May play a role in the basolateral recycling pathway and in phagosome maturation. May play a role in endoplasmic reticulum dynamics and morphology controlling tubulation along microtubules and tubules fusion. Together with LRRK2, RAB8A, and RILPL1, it regulates ciliogenesis. When phosphorylated by LRRK2 on Thr-73, binds RILPL1 and inhibits ciliogenesis. Participates in the export of a subset of neosynthesized proteins through a Rab8-Rab10-Rab11-dependent endososomal export route. Targeted to and stabilized on stressed lysosomes through LRRK2 phosphorylation where it promotes the extracellular release of lysosomal content through EHBP1 and EHNP1L1 effector proteins. (Microbial infection) Upon Legionella pneumophila infection promotes endoplasmic reticulum recruitment and bacterial replication. Plays a role in remodeling the Legionella-containing vacuole (LCV) into an endoplasmic reticulum-like vacuole. In Homo sapiens (Human), this protein is Ras-related protein Rab-10.